The sequence spans 353 residues: Alternative oxidase, mitochondrial (353 aa).

The segment at 25-45 is disordered; it reads FRSTDDEDENNPSTELATDTT. Residues 35 to 45 are compositionally biased toward polar residues; it reads NPSTELATDTT. A helical transmembrane segment spans residues 153 to 173; sequence FLFLESIAGVPGMVAGMIRHL. Fe cation contacts are provided by glutamate 157, glutamate 196, and histidine 199. Residues 217–237 form a helical membrane-spanning segment; it reads LLIGQIIFYNLFFISYLISPA. Fe cation contacts are provided by glutamate 247, glutamate 301, and histidine 304.

The protein belongs to the alternative oxidase family. The cofactor is Fe cation.

The protein resides in the mitochondrion inner membrane. Functionally, catalyzes cyanide-resistant oxygen consumption. May increase respiration when the cytochrome respiratory pathway is restricted, or in response to low temperatures. The sequence is that of Alternative oxidase, mitochondrial (AOX) from Yarrowia lipolytica (strain CLIB 122 / E 150) (Yeast).